The chain runs to 193 residues: Segregation and condensation protein B (193 aa).

The protein belongs to the ScpB family. Homodimer. Homodimerization may be required to stabilize the binding of ScpA to the Smc head domains. Component of a cohesin-like complex composed of ScpA, ScpB and the Smc homodimer, in which ScpA and ScpB bind to the head domain of Smc. The presence of the three proteins is required for the association of the complex with DNA.

It is found in the cytoplasm. Participates in chromosomal partition during cell division. May act via the formation of a condensin-like complex containing Smc and ScpA that pull DNA away from mid-cell into both cell halves. The polypeptide is Segregation and condensation protein B (Clostridium botulinum (strain 657 / Type Ba4)).